The chain runs to 395 residues: Serine-type anaerobic sulfatase-maturating enzyme (395 aa).

Residues 18-249 (PRSPVPFHIL…QWRKRCDRGR (232 aa)) enclose the Radical SAM core domain. Residues cysteine 35 and cysteine 39 each contribute to the [4Fe-4S] cluster site. Tyrosine 41 contacts S-adenosyl-L-methionine. Residue cysteine 42 participates in [4Fe-4S] cluster binding. Residues glycine 84 and arginine 152 each coordinate S-adenosyl-L-methionine. Residues cysteine 270, cysteine 276, and cysteine 291 each coordinate [4Fe-4S] cluster. Aspartate 292 serves as the catalytic Proton acceptor. Cysteine 331, cysteine 334, cysteine 340, cysteine 344, and cysteine 357 together coordinate [4Fe-4S] cluster.

Belongs to the radical SAM superfamily. Anaerobic sulfatase-maturating enzyme family. As to quaternary structure, monomer. Interacts with AtsA prior to its export to the periplasm. This interaction depends on the presence of AtsA 'Ser-72'. Binding of SAM to AtsB promotes the formation of a ternary AtsA-AtsB-SAM complex. It depends on [4Fe-4S] cluster as a cofactor.

Its subcellular location is the cytoplasm. It carries out the reaction L-seryl-[sulfatase] + S-adenosyl-L-methionine = 3-oxo-L-alanyl-[sulfatase] + 5'-deoxyadenosine + L-methionine + H(+). Its pathway is protein modification; sulfatase oxidation. With respect to regulation, activity is inhibited by iron chelators. Involved in 'Ser-type' sulfatase maturation under anaerobic conditions. Catalyzes the post-translational modification of serine ('Ser-72' in the arylsulfatase AtsA) into 3-oxoalanine (also known as C(alpha)-formylglycine (FGly)), by a free radical chemical mechanism initiated via the reductive cleavage of S-adenosyl-L-methionine (SAM). Is capable of catalyzing multiple turnovers. In vitro, use of a peptide substrate in which the target serine is changed to cysteine also gives rise to turnover, supporting approximately 4-fold the activity of that observed with the natural substrate. The chain is Serine-type anaerobic sulfatase-maturating enzyme from Klebsiella pneumoniae.